Reading from the N-terminus, the 493-residue chain is Glycogen synthase 1 (493 aa).

Lysine 15 lines the ADP-alpha-D-glucose pocket.

This sequence belongs to the glycosyltransferase 1 family. Bacterial/plant glycogen synthase subfamily.

The enzyme catalyses [(1-&gt;4)-alpha-D-glucosyl](n) + ADP-alpha-D-glucose = [(1-&gt;4)-alpha-D-glucosyl](n+1) + ADP + H(+). It functions in the pathway glycan biosynthesis; glycogen biosynthesis. In terms of biological role, synthesizes alpha-1,4-glucan chains using ADP-glucose. The protein is Glycogen synthase 1 of Methylococcus capsulatus (strain ATCC 33009 / NCIMB 11132 / Bath).